The sequence spans 1248 residues: Apoptotic protease-activating factor 1 (1248 aa).

One can recognise a CARD domain in the interval 1–90 (MDAKARNCLL…KDLAALLHDG (90 aa)). The NB-ARC domain occupies 104–415 (SGITSYVRTV…METEEVEDIL (312 aa)). ATP-binding positions include 154 to 161 (GMAGCGKS) and Arg-265. A WD 1-1 repeat occupies 613-652 (PHTDAVYHACFSEDGQRIASCGADKTLQVFKAETGEKLLE). A WD 1-2 repeat occupies 655–694 (AHEDEVLCCAFSTDDRFIATCSVDKKVKIWNSMTGELVHT). Residues 697–738 (EHSEQVNCCHFTNSSHHLLLATGSSDCFLKLWDLNQKECRNT) form a WD 1-3 repeat. One copy of the WD 1-4 repeat lies at 741 to 780 (GHTNSVNHCRFSPDDKLLASCSADGTLKLWDATSANERKS). One copy of the WD 1-5 repeat lies at 796–836 (DMEVIVKCCSWSADGARIMVAAKNKIFLFDIHTSGLLGEIH). The WD 1-6 repeat unit spans residues 838 to 877 (GHHSTIQYCDFSPQNHLAVVALSQYCVELWNTDSRSKVAD). A WD 1-7 repeat occupies 880–910 (GHLSWVHGVMFSPDGSSFLTSSDDQTIRLWE). The interpropeller linker stretch occupies residues 910-921 (ETKKVCKNSAVM). Residues 922 to 958 (LKQEVDVVFQENEVMVLAVDHIRRLQLINGRTGQIDY) form a WD 2-1 repeat. One copy of the WD 2-2 repeat lies at 959-998 (LTEAQVSCCCLSPHLQYIAFGDENGAIEILELVNNRIFQS). The stretch at 1001-1040 (QHKKTVWHIQFTADEKTLISSSDDAEIQVWNWQLDKCIFL) is one WD 2-3 repeat. The stretch at 1042–1080 (GHQETVKDFRLLKNSRLLSWSFDGTVKVWNIITGNKEKD) is one WD 2-4 repeat. A WD 2-5 repeat occupies 1083-1122 (CHQGTVLSCDISHDATKFSSTSADKTAKIWSFDLLLPLHE). Residues 1125–1164 (GHNGCVRCSAFSVDSTLLATGDDNGEIRIWNVSNGELLHL) form a WD 2-6 repeat. One copy of the WD 2-7 repeat lies at 1175–1212 (THGGWVTDLCFSPDGKMLISAGGYIKWWNVVTGESSQT). The stretch at 1213 to 1248 (FYTNGTNLKKIHVSPDFKTYVTVDNLGILYILQTLE) is one WD 2-8 repeat.

As to quaternary structure, monomer. Oligomerizes to a heptameric ring, known as the apoptosome, upon binding of cytochrome c and dATP. Oligomeric Apaf-1 and pro-caspase-9 bind to each other via their respective NH2-terminal CARD domains and consecutively mature caspase-9 is released from the complex. Pro-caspase-3 is recruited into the Apaf-1-pro-caspase-9 complex via interaction with pro-caspase-9. Interacts with APIP. Interacts (via CARD and NACHT domains) with NAIP/BIRC1 (via NACHT domain). Interacts with CIAO2A. As to expression, ubiquitous. Highest levels of expression in adult spleen and peripheral blood leukocytes, and in fetal brain, kidney and lung. Isoform 1 is expressed in heart, kidney and liver.

It is found in the cytoplasm. In terms of biological role, oligomeric Apaf-1 mediates the cytochrome c-dependent autocatalytic activation of pro-caspase-9 (Apaf-3), leading to the activation of caspase-3 and apoptosis. This activation requires ATP. Isoform 6 is less effective in inducing apoptosis. This Homo sapiens (Human) protein is Apoptotic protease-activating factor 1.